A 33-amino-acid chain; its full sequence is U13-ctenitoxin-Pn1c (33 aa).

3 disulfide bridges follow: cysteine 3-cysteine 17, cysteine 10-cysteine 21, and cysteine 16-cysteine 30.

In terms of tissue distribution, expressed by the venom gland.

It localises to the secreted. Its function is as follows. Acts as a neurotoxin. This is U13-ctenitoxin-Pn1c from Phoneutria nigriventer (Brazilian armed spider).